The following is a 119-amino-acid chain: Ribonuclease P protein component (119 aa).

This sequence belongs to the RnpA family. Consists of a catalytic RNA component (M1 or rnpB) and a protein subunit.

The catalysed reaction is Endonucleolytic cleavage of RNA, removing 5'-extranucleotides from tRNA precursor.. RNaseP catalyzes the removal of the 5'-leader sequence from pre-tRNA to produce the mature 5'-terminus. It can also cleave other RNA substrates such as 4.5S RNA. The protein component plays an auxiliary but essential role in vivo by binding to the 5'-leader sequence and broadening the substrate specificity of the ribozyme. This chain is Ribonuclease P protein component, found in Sodalis glossinidius (strain morsitans).